The following is a 467-amino-acid chain: 3-isopropylmalate dehydratase large subunit (467 aa).

Cys347, Cys408, and Cys411 together coordinate [4Fe-4S] cluster.

It belongs to the aconitase/IPM isomerase family. LeuC type 1 subfamily. In terms of assembly, heterodimer of LeuC and LeuD. The cofactor is [4Fe-4S] cluster.

It carries out the reaction (2R,3S)-3-isopropylmalate = (2S)-2-isopropylmalate. It functions in the pathway amino-acid biosynthesis; L-leucine biosynthesis; L-leucine from 3-methyl-2-oxobutanoate: step 2/4. In terms of biological role, catalyzes the isomerization between 2-isopropylmalate and 3-isopropylmalate, via the formation of 2-isopropylmaleate. The sequence is that of 3-isopropylmalate dehydratase large subunit from Bordetella pertussis (strain Tohama I / ATCC BAA-589 / NCTC 13251).